The following is a 284-amino-acid chain: Serine/threonine-protein phosphatase Pgam5, mitochondrial (284 aa).

A helical transmembrane segment spans residues Leu8–Asp24.

Belongs to the phosphoglycerate mutase family. BPG-dependent PGAM subfamily. In terms of assembly, interacts with skn-1 isoforms a and c.

It is found in the mitochondrion outer membrane. It carries out the reaction O-phospho-L-seryl-[protein] + H2O = L-seryl-[protein] + phosphate. It catalyses the reaction O-phospho-L-threonyl-[protein] + H2O = L-threonyl-[protein] + phosphate. Functionally, displays phosphatase activity for serine/threonine residues. Has apparently no phosphoglycerate mutase activity. In Caenorhabditis elegans, this protein is Serine/threonine-protein phosphatase Pgam5, mitochondrial (pgam-5).